The primary structure comprises 360 residues: DNA replication and repair protein RecF (360 aa).

30–37 (GQNGSGKT) contacts ATP.

It belongs to the RecF family.

Its subcellular location is the cytoplasm. Its function is as follows. The RecF protein is involved in DNA metabolism; it is required for DNA replication and normal SOS inducibility. RecF binds preferentially to single-stranded, linear DNA. It also seems to bind ATP. This is DNA replication and repair protein RecF from Shewanella piezotolerans (strain WP3 / JCM 13877).